The sequence spans 308 residues: Acetyl-coenzyme A carboxylase carboxyl transferase subunit beta (308 aa).

One can recognise a CoA carboxyltransferase N-terminal domain in the interval 25-294 (VWTKCTSCEQ…PLVVSVNDAP (270 aa)). Residues Cys29, Cys32, Cys48, and Cys51 each contribute to the Zn(2+) site. A C4-type zinc finger spans residues 29-51 (CTSCEQVLYYAELERNLEVCPKC).

Belongs to the AccD/PCCB family. Acetyl-CoA carboxylase is a heterohexamer composed of biotin carboxyl carrier protein (AccB), biotin carboxylase (AccC) and two subunits each of ACCase subunit alpha (AccA) and ACCase subunit beta (AccD). The cofactor is Zn(2+).

It is found in the cytoplasm. It carries out the reaction N(6)-carboxybiotinyl-L-lysyl-[protein] + acetyl-CoA = N(6)-biotinyl-L-lysyl-[protein] + malonyl-CoA. The protein operates within lipid metabolism; malonyl-CoA biosynthesis; malonyl-CoA from acetyl-CoA: step 1/1. In terms of biological role, component of the acetyl coenzyme A carboxylase (ACC) complex. Biotin carboxylase (BC) catalyzes the carboxylation of biotin on its carrier protein (BCCP) and then the CO(2) group is transferred by the transcarboxylase to acetyl-CoA to form malonyl-CoA. This is Acetyl-coenzyme A carboxylase carboxyl transferase subunit beta from Vibrio cholerae serotype O1 (strain ATCC 39315 / El Tor Inaba N16961).